The following is a 491-amino-acid chain: Probable CtpA-like serine protease (491 aa).

The interval Met1–Ser22 is disordered. A compositionally biased stretch (polar residues) spans Glu9 to Ser22. Residues Phe34–Ile54 form a helical membrane-spanning segment. The PDZ domain occupies Thr119–Gly201. Residues Ser324, Asp335, and Lys349 each act as charge relay system in the active site.

This sequence belongs to the peptidase S41A family.

The protein resides in the cell membrane. The chain is Probable CtpA-like serine protease from Staphylococcus saprophyticus subsp. saprophyticus (strain ATCC 15305 / DSM 20229 / NCIMB 8711 / NCTC 7292 / S-41).